Reading from the N-terminus, the 87-residue chain is Small ribosomal subunit protein uS17 (87 aa).

The protein belongs to the universal ribosomal protein uS17 family. As to quaternary structure, part of the 30S ribosomal subunit.

Functionally, one of the primary rRNA binding proteins, it binds specifically to the 5'-end of 16S ribosomal RNA. The polypeptide is Small ribosomal subunit protein uS17 (Anoxybacillus flavithermus (strain DSM 21510 / WK1)).